Reading from the N-terminus, the 165-residue chain is Chorismate pyruvate-lyase (165 aa).

Substrate is bound by residues M35, R77, L115, and E156.

This sequence belongs to the UbiC family. In terms of assembly, monomer.

It is found in the cytoplasm. It carries out the reaction chorismate = 4-hydroxybenzoate + pyruvate. Its pathway is cofactor biosynthesis; ubiquinone biosynthesis. Its function is as follows. Removes the pyruvyl group from chorismate, with concomitant aromatization of the ring, to provide 4-hydroxybenzoate (4HB) for the ubiquinone pathway. The polypeptide is Chorismate pyruvate-lyase (Salmonella arizonae (strain ATCC BAA-731 / CDC346-86 / RSK2980)).